We begin with the raw amino-acid sequence, 372 residues long: NADH-quinone oxidoreductase subunit H (372 aa).

8 helical membrane passes run Leu-34–Leu-54, Phe-106–Leu-126, Val-139–Gly-159, Ile-178–Thr-198, Phe-217–Leu-237, Val-269–Phe-289, Val-313–Leu-333, and Val-352–Pro-372.

It belongs to the complex I subunit 1 family. As to quaternary structure, NDH-1 is composed of 14 different subunits. Subunits NuoA, H, J, K, L, M, N constitute the membrane sector of the complex.

Its subcellular location is the cell inner membrane. The catalysed reaction is a quinone + NADH + 5 H(+)(in) = a quinol + NAD(+) + 4 H(+)(out). NDH-1 shuttles electrons from NADH, via FMN and iron-sulfur (Fe-S) centers, to quinones in the respiratory chain. The immediate electron acceptor for the enzyme in this species is believed to be ubiquinone. Couples the redox reaction to proton translocation (for every two electrons transferred, four hydrogen ions are translocated across the cytoplasmic membrane), and thus conserves the redox energy in a proton gradient. This subunit may bind ubiquinone. The sequence is that of NADH-quinone oxidoreductase subunit H from Chlorobium luteolum (strain DSM 273 / BCRC 81028 / 2530) (Pelodictyon luteolum).